The primary structure comprises 329 residues: uncharacterized protein (329 aa).

Residues Lys-109–Lys-147 form a disordered region. The segment covering Thr-116–Ser-131 has biased composition (low complexity).

It to the C-terminal of MG321/MPN_456.

This is an uncharacterized protein from Mycoplasma pneumoniae (strain ATCC 29342 / M129 / Subtype 1) (Mycoplasmoides pneumoniae).